The sequence spans 685 residues: Polyphosphate kinase (685 aa).

ATP is bound at residue asparagine 45. Mg(2+) contacts are provided by arginine 375 and arginine 405. Residue histidine 435 is the Phosphohistidine intermediate of the active site. ATP-binding residues include tyrosine 468, arginine 564, and histidine 592.

The protein belongs to the polyphosphate kinase 1 (PPK1) family. Requires Mg(2+) as cofactor. Post-translationally, an intermediate of this reaction is the autophosphorylated ppk in which a phosphate is covalently linked to a histidine residue through a N-P bond.

The enzyme catalyses [phosphate](n) + ATP = [phosphate](n+1) + ADP. Catalyzes the reversible transfer of the terminal phosphate of ATP to form a long-chain polyphosphate (polyP). In Neisseria meningitidis serogroup A / serotype 4A (strain DSM 15465 / Z2491), this protein is Polyphosphate kinase.